Consider the following 642-residue polypeptide: MIKVTFPDGNIKSYKKGITVLEVAEDISISLAKKIVAAKFNEDLVEISRKLEHDGKLQLLTPKEELSFHVLNHSAAHLMAQAIRKLYPDALFGVGPAIEEGYYYDVDFKDSVFTDADLEEVEKMMKKLSEENHLIERIEVSYDEARDIFKNDPYKLELIEVYKDDQLSVYRQGEFIDLCRGGHVPSTKYIKHFKLLSIAGAYWRGDAKNRQLVRVYGIAYFEKAELDKHLVMLEERKLRDHRKIGKDLDIFMTSQEVGSGLPFWLPKGATIRRIIERYITDKELELGYLHVYTPIMANVEFYKQSGHWDHYHENMYPPMDLGDGEMLVLRPMNCPHHMMIYKKDIHSYRELPIRFAELGMMHRYEKSGALSGLQRVREMTLNDAHIFVRPDQIKEEFMRVVHLIIEVYKDFKITDYSFRLSYRDPENKEKYFDDDQMWQRAESELKNVMDEMKLPYKEAIGEAAFYGPKLDIQVRTAMGMEETLSTVQLDFLLPERFDLTYVGEDGKNNHRPVVIHRGVVSTMERFVAYLIEEYKGSFPLWLAPVQLKLIPVNLDLHKDYVMNLHEQLKKLGFRVESDFRNEKLGYKIREAQTLKIPYQLVVGDNEMNTHSITYRPYGSEKQINISIDGFIKLLNERMINKD.

One can recognise a TGS domain in the interval M1–T61. The tract at residues D240 to P539 is catalytic. The Zn(2+) site is built by C334, H385, and H516.

It belongs to the class-II aminoacyl-tRNA synthetase family. Homodimer. Requires Zn(2+) as cofactor.

It localises to the cytoplasm. It carries out the reaction tRNA(Thr) + L-threonine + ATP = L-threonyl-tRNA(Thr) + AMP + diphosphate + H(+). Its function is as follows. Catalyzes the attachment of threonine to tRNA(Thr) in a two-step reaction: L-threonine is first activated by ATP to form Thr-AMP and then transferred to the acceptor end of tRNA(Thr). Also edits incorrectly charged L-seryl-tRNA(Thr). The polypeptide is Threonine--tRNA ligase (Acholeplasma laidlawii (strain PG-8A)).